A 215-amino-acid chain; its full sequence is Adenylate kinase (215 aa).

Residue 10–15 (GAGKGT) coordinates ATP. Residues 30-59 (STGDMLRAAVKAGTELGLIAKSVMDSGGLV) are NMP. Residues Thr31, Arg36, 57-59 (GLV), 85-88 (GFPR), and Gln92 each bind AMP. The interval 122 to 159 (GRRVHEASGRVYHTVYNPPKVEGKDDVTGDDLVQRKDD) is LID. ATP-binding positions include Arg123 and 132-133 (VY). 2 residues coordinate AMP: Arg156 and Arg167. Gly201 serves as a coordination point for ATP.

Belongs to the adenylate kinase family. In terms of assembly, monomer.

It localises to the cytoplasm. The enzyme catalyses AMP + ATP = 2 ADP. Its pathway is purine metabolism; AMP biosynthesis via salvage pathway; AMP from ADP: step 1/1. Its function is as follows. Catalyzes the reversible transfer of the terminal phosphate group between ATP and AMP. Plays an important role in cellular energy homeostasis and in adenine nucleotide metabolism. This chain is Adenylate kinase, found in Pseudomonas fluorescens (strain SBW25).